The sequence spans 571 residues: PHD and RING finger domain-containing protein C126.07c (571 aa).

An RING-type 1; atypical zinc finger spans residues 18–79; it reads CIICLSNLPN…RVANTCPLCR (62 aa). The segment at 122-170 adopts a PHD-type zinc-finger fold; the sequence is TCRCVICGRSDHAEVLLLCDGCDDAYHTYCLNMDAVPIEEFYCPNCVLL. The RING-type 2; degenerate zinc-finger motif lies at 125–168; it reads CVICGRSDHAEVLLLCDGCDDAYHTYCLNMDAVPIEEFYCPNCV. Positions 305-324 are enriched in polar residues; that stretch reads ATEATISNPRPSSGRFQQTP. A disordered region spans residues 305–377; the sequence is ATEATISNPR…VLGNNSSSKS (73 aa). The span at 346-356 shows a compositional bias: basic residues; sequence RRQKRPTRRHI. Polar residues predominate over residues 359 to 377; it reads SNKSSGSSTVLGNNSSSKS.

It localises to the cytoplasm. The protein localises to the nucleus. The chain is PHD and RING finger domain-containing protein C126.07c from Schizosaccharomyces pombe (strain 972 / ATCC 24843) (Fission yeast).